The sequence spans 353 residues: Rhodopsin (353 aa).

Over 1–36 (MNGTEGPYFYIPMVNTTGIVRSPYEYPQYYLVNPAA) the chain is Extracellular. N-linked (GlcNAc...) asparagine glycosylation is found at asparagine 2 and asparagine 15. The helical transmembrane segment at 37 to 61 (YAALGAYMFLLILIGFPVNFLTLYV) threads the bilayer. Residues 62–73 (TIEHKKLRTPLN) are Cytoplasmic-facing. A helical transmembrane segment spans residues 74–96 (YILLNLAVADLFMVFGGFTTTMY). The Extracellular segment spans residues 97 to 110 (TSMHGYFVLGRLGC). Cysteine 110 and cysteine 187 are oxidised to a cystine. Residues 111–133 (NLEGFFATLGGEIALWSLVVLAV) traverse the membrane as a helical segment. Residues 134 to 136 (ERW) carry the 'Ionic lock' involved in activated form stabilization motif. Topologically, residues 134 to 152 (ERWMVVCKPISNFRFGEDH) are cytoplasmic. The helical transmembrane segment at 153–173 (AIMGLAFTWVMAAACAVPPLV) threads the bilayer. Residues 174–202 (GWSRYIPEGMQCSCGIDYYTRAEGFNNES) lie on the Extracellular side of the membrane. A glycan (N-linked (GlcNAc...) asparagine) is linked at asparagine 200. The chain crosses the membrane as a helical span at residues 203–224 (FVIYMFVCHFLIPLVVVFFCYG). The Cytoplasmic portion of the chain corresponds to 225-252 (RLLCAVKEAAAAQQESETTQRAEREVSR). The helical transmembrane segment at 253 to 274 (MVVIMVVAFLVCWCPYAGVAWY) threads the bilayer. The Extracellular portion of the chain corresponds to 275–286 (IFTHQGSEFGPL). Residues 287 to 308 (FMTFPAFFAKSSSIYNPMIYIC) traverse the membrane as a helical segment. Lysine 296 carries the post-translational modification N6-(retinylidene)lysine. Topologically, residues 309–353 (MNKQFRQCMITTLCCGKNPFEEEEGASTTSKTEASSVSSSSVSPA) are cytoplasmic. 2 S-palmitoyl cysteine lipidation sites follow: cysteine 322 and cysteine 323. The tract at residues 329–353 (EEEEGASTTSKTEASSVSSSSVSPA) is disordered. The segment covering 334–353 (ASTTSKTEASSVSSSSVSPA) has biased composition (low complexity).

Belongs to the G-protein coupled receptor 1 family. Opsin subfamily. In terms of processing, phosphorylated on some or all of the serine and threonine residues present in the C-terminal region. Post-translationally, contains one covalently linked retinal chromophore.

It is found in the membrane. Its subcellular location is the cell projection. It localises to the cilium. The protein resides in the photoreceptor outer segment. In terms of biological role, photoreceptor required for image-forming vision at low light intensity. While most salt water fish species use retinal as chromophore, most freshwater fish use 3-dehydroretinal, or a mixture of retinal and 3-dehydroretinal. Light-induced isomerization of 11-cis to all-trans retinal triggers a conformational change that activates signaling via G-proteins. Subsequent receptor phosphorylation mediates displacement of the bound G-protein alpha subunit by arrestin and terminates signaling. The polypeptide is Rhodopsin (rho) (Chelon auratus (Golden grey mullet)).